We begin with the raw amino-acid sequence, 515 residues long: Protein FAM98A (515 aa).

Disordered regions lie at residues 297-411 (VLMG…YHGG) and 432-515 (SGYQ…HYTS). Residues 302–311 (VPDRGGRPNE) are compositionally biased toward basic and acidic residues. Residues 382–395 (WTDGGSASGGGYQD) are compositionally biased toward gly residues. A compositionally biased stretch (basic and acidic residues) spans 444 to 456 (RYQDGGHHGERGS). The span at 457–481 (GRGGRGGRGGRGGRGSQGGGWGGRG) shows a compositional bias: gly residues. Low complexity predominate over residues 485–501 (YHQGGQFEQHFQHGGYQ). Polar residues predominate over residues 502-515 (YSHSGFGQGRHYTS).

It belongs to the FAM98 family. In terms of assembly, interacts (via N- and C-terminus) with DDX1. Interacts (via N- and C-terminus) with C14orf166. Interacts with FAM98B. Interacts with PLEKHM1 (via N- and C-terminus).

Positively stimulates PRMT1-induced protein arginine methylation. Involved in skeletal homeostasis. Positively regulates lysosome peripheral distribution and ruffled border formation in osteoclasts. The polypeptide is Protein FAM98A (Rattus norvegicus (Rat)).